We begin with the raw amino-acid sequence, 255 residues long: Sugar fermentation stimulation protein homolog (255 aa).

It belongs to the SfsA family.

This is Sugar fermentation stimulation protein homolog from Synechococcus sp. (strain WH7803).